A 635-amino-acid polypeptide reads, in one-letter code: MVSIRLPDGSVRQYEHPVTVAEVAASIGPGLAKAALGGKIDGELVDTSALIDHDVALAIVTDKDADGLDIIRHSTAHLLAYAVKDLFPEAQVTIGPVIDNGFYYDFSYSRPFTPEDLEKIEKRMQELAKKDEPVSRRVVSRDEAADYFKSIGEKYKAEIIESIPASDDIKLYSHGGFTDLCRGPHVPSTGKLKVFKLMKVAGAYWRGDSKNEQLQRIYGTAWTKKEDQDAYLHMLEEAEKRDHRKLGKQLDLFHMQDESPGMVFWHPRGWTLWQQVEQYMRRRVNEAGYLEIKTPMIMDRSLWEASGHWQNYRDNMFTTESEKRDYAIKPMNCPGHVQVFNHGLRSYRDLPLRYAEFGSCHRNESSGALHGLMRVRGFVQDDAHIFCTEDQFISESIAFNTLAMSVYKDFGFDNVEIKLSLRPDARAGTDEIWDRAEQGLRDALTACGVTWEELPGEGAFYGPKVEYHIKDALGRSWQCGTLQLDMVLPERLGAEFVAEDNSRRRPIMLHRAIVGSMERFLGILIEHHAGAMPAWLAPMQVVVMNIAESQAEYAQSLAQSLQKQGVRVEADLRNEKISYKIREHTLEKVPYLLVVGDKERDAQTVAVRARGGIDLGVMPVDAFSERLRQDVQTFN.

Residues 1–61 enclose the TGS domain; that stretch reads MVSIRLPDGS…DHDVALAIVT (61 aa). A catalytic region spans residues 242–533; sequence DHRKLGKQLD…LIEHHAGAMP (292 aa). 3 residues coordinate Zn(2+): Cys-333, His-384, and His-510.

This sequence belongs to the class-II aminoacyl-tRNA synthetase family. Homodimer. Zn(2+) is required as a cofactor.

It is found in the cytoplasm. It carries out the reaction tRNA(Thr) + L-threonine + ATP = L-threonyl-tRNA(Thr) + AMP + diphosphate + H(+). Catalyzes the attachment of threonine to tRNA(Thr) in a two-step reaction: L-threonine is first activated by ATP to form Thr-AMP and then transferred to the acceptor end of tRNA(Thr). Also edits incorrectly charged L-seryl-tRNA(Thr). This Paraburkholderia phymatum (strain DSM 17167 / CIP 108236 / LMG 21445 / STM815) (Burkholderia phymatum) protein is Threonine--tRNA ligase.